The following is a 493-amino-acid chain: Dipeptide permease D (493 aa).

Residues 1–13 are Cytoplasmic-facing; it reads MNKHASQPRAIYY. Residues 14–34 traverse the membrane as a helical segment; the sequence is VVALQIWEYFSFYGMRALLIL. Over 35–48 the chain is Periplasmic; it reads YLTNQLKYNDTHAY. Residues 49-69 traverse the membrane as a helical segment; it reads ELFSAYCSLVYVTPILGGFLA. Over 70-77 the chain is Cytoplasmic; sequence DKVLGNRM. The helical transmembrane segment at 78–98 threads the bilayer; it reads AVMLGALLMAIGHVVLGASEI. Over 99 to 100 the chain is Periplasmic; it reads HP. A helical membrane pass occupies residues 101-121; the sequence is SFLYLSLAIIVCGYGLFKSNV. At 122 to 137 the chain is on the cytoplasmic side; sequence SCLLGELYEPTDPRRD. A helical membrane pass occupies residues 138–158; sequence GGFSLMYAAGNVGSIIAPIAC. At 159–166 the chain is on the periplasmic side; the sequence is GYAQEEYS. A helical transmembrane segment spans residues 167–187; it reads WAMGFGLAAVGMIAGLVIFLC. Over 188 to 211 the chain is Cytoplasmic; sequence GNRHFTHTRGVNKKVLRATNFLLP. A helical transmembrane segment spans residues 212 to 232; sequence NWGWLLVLLVATPALITVLFW. At 233 to 234 the chain is on the periplasmic side; sequence KE. Residues 235–255 form a helical membrane-spanning segment; it reads WSVYALIVATIIGLGVLAKIY. The Cytoplasmic segment spans residues 256–268; the sequence is RKAENQKQRKELR. Residues 269 to 289 form a helical membrane-spanning segment; it reads LIVTLTFFSMLFWAFAQQGGS. Topologically, residues 290–311 are periplasmic; it reads SISLYIDRFVNRDMFGYTVPTA. The helical transmembrane segment at 312–332 threads the bilayer; it reads MFQSINAFAVMLCGVFLAWVV. Topologically, residues 333-343 are cytoplasmic; sequence KESVAGNRTVR. A helical membrane pass occupies residues 344-364; it reads IWGKFALGLGLMSAGFCILTL. Over 365–378 the chain is Periplasmic; it reads SARWSAMYGHSSLP. Residues 379-399 form a helical membrane-spanning segment; that stretch reads LMVLGLAVMGFAELFIDPVAM. Topologically, residues 400-412 are cytoplasmic; the sequence is SQITRIEIPGVTG. The helical transmembrane segment at 413–433 threads the bilayer; sequence VLTGIYMLLSGAIANYLAGVI. Residues 434–461 lie on the Periplasmic side of the membrane; that stretch reads ADQTSQASFDASGAINYSINAYIEVFDQ. A helical membrane pass occupies residues 462–482; that stretch reads ITWGALACVGVVLMIWLYQAL. Topologically, residues 483 to 493 are cytoplasmic; the sequence is KFRNRALALES.

The protein belongs to the major facilitator superfamily. Proton-dependent oligopeptide transporter (POT/PTR) (TC 2.A.17) family. DtpD subfamily. As to quaternary structure, monomer in solution. Exhibits a doughnut-like shape with a central, shallow depression and has a diameter of 8 nm.

The protein resides in the cell inner membrane. Probable proton-dependent permease that transports dipeptides. This is Dipeptide permease D (dtpD) from Escherichia coli O157:H7.